The primary structure comprises 932 residues: Lipoxygenase 2.2, chloroplastic (932 aa).

One can recognise a PLAT domain in the interval 79–219; that stretch reads MKATVSVHMK…CSPDKRTFFP (141 aa). One can recognise a Lipoxygenase domain in the interval 223-932; it reads SYIPSQTPKG…EMGIPNSISI (710 aa). Basic and acidic residues predominate over residues 270-284; sequence PESKRPVLGGKEHPY. The segment at 270–311 is disordered; the sequence is PESKRPVLGGKEHPYPRRCRTGRPRSKTDPSSEEESHKKGEM. The span at 285 to 294 shows a compositional bias: basic residues; sequence PRRCRTGRPR. Basic and acidic residues predominate over residues 295–311; the sequence is SKTDPSSEEESHKKGEM. The Fe cation site is built by histidine 588, histidine 593, histidine 778, asparagine 782, and isoleucine 932.

This sequence belongs to the lipoxygenase family. Fe cation is required as a cofactor.

The protein resides in the plastid. Its subcellular location is the chloroplast. It carries out the reaction (9Z,12Z)-octadecadienoate + O2 = (13S)-hydroperoxy-(9Z,11E)-octadecadienoate. The catalysed reaction is (9Z,12Z,15Z)-octadecatrienoate + O2 = (13S)-hydroperoxy-(9Z,11E,15Z)-octadecatrienoate. It functions in the pathway lipid metabolism; oxylipin biosynthesis. Its function is as follows. Plant lipoxygenase may be involved in a number of diverse aspects of plant physiology including growth and development, pest resistance, and senescence or responses to wounding. This enzyme exhibits linoleate 13-lipoxygenase activity. The polypeptide is Lipoxygenase 2.2, chloroplastic (LOX2.2) (Hordeum vulgare (Barley)).